Reading from the N-terminus, the 677-residue chain is UPF0313 protein RPA0679 (677 aa).

Positions 335–601 (AWDMIKTSVT…VEAIKGLRQR (267 aa)) constitute a Radical SAM core domain. Residues C349, C353, and C356 each contribute to the [4Fe-4S] cluster site. The tract at residues 635–677 (RPDQLVPAHQPPGTGKAAGTRRPVRGDGPKPQRFTTKGVRLVK) is disordered.

Belongs to the UPF0313 family. [4Fe-4S] cluster is required as a cofactor.

In Rhodopseudomonas palustris (strain ATCC BAA-98 / CGA009), this protein is UPF0313 protein RPA0679.